A 361-amino-acid chain; its full sequence is Probable dual-specificity RNA methyltransferase RlmN (361 aa).

Glutamate 91 acts as the Proton acceptor in catalysis. Residues 97-335 form the Radical SAM core domain; the sequence is QHYGLSVCVT…CVVRQEHGTD (239 aa). Cysteine 104 and cysteine 340 are oxidised to a cystine. 3 residues coordinate [4Fe-4S] cluster: cysteine 111, cysteine 115, and cysteine 118. Residues 163–164, serine 195, 218–220, and asparagine 296 contribute to the S-adenosyl-L-methionine site; these read GE and SLH. Catalysis depends on cysteine 340, which acts as the S-methylcysteine intermediate.

The protein belongs to the radical SAM superfamily. RlmN family. [4Fe-4S] cluster serves as cofactor.

It localises to the cytoplasm. It carries out the reaction adenosine(2503) in 23S rRNA + 2 reduced [2Fe-2S]-[ferredoxin] + 2 S-adenosyl-L-methionine = 2-methyladenosine(2503) in 23S rRNA + 5'-deoxyadenosine + L-methionine + 2 oxidized [2Fe-2S]-[ferredoxin] + S-adenosyl-L-homocysteine. The enzyme catalyses adenosine(37) in tRNA + 2 reduced [2Fe-2S]-[ferredoxin] + 2 S-adenosyl-L-methionine = 2-methyladenosine(37) in tRNA + 5'-deoxyadenosine + L-methionine + 2 oxidized [2Fe-2S]-[ferredoxin] + S-adenosyl-L-homocysteine. In terms of biological role, specifically methylates position 2 of adenine 2503 in 23S rRNA and position 2 of adenine 37 in tRNAs. This chain is Probable dual-specificity RNA methyltransferase RlmN, found in Streptococcus mutans serotype c (strain ATCC 700610 / UA159).